Consider the following 206-residue polypeptide: dTTP/UTP pyrophosphatase (206 aa).

D79 acts as the Proton acceptor in catalysis.

The protein belongs to the Maf family. YhdE subfamily. A divalent metal cation is required as a cofactor.

It is found in the cytoplasm. The catalysed reaction is dTTP + H2O = dTMP + diphosphate + H(+). It catalyses the reaction UTP + H2O = UMP + diphosphate + H(+). Functionally, nucleoside triphosphate pyrophosphatase that hydrolyzes dTTP and UTP. May have a dual role in cell division arrest and in preventing the incorporation of modified nucleotides into cellular nucleic acids. In Rhizobium johnstonii (strain DSM 114642 / LMG 32736 / 3841) (Rhizobium leguminosarum bv. viciae), this protein is dTTP/UTP pyrophosphatase.